A 314-amino-acid chain; its full sequence is Mitochondrial 2-oxoglutarate/malate carrier protein (314 aa).

An N-acetylalanine modification is found at A2. Phosphoserine is present on S6. Solcar repeat units follow at residues 23–108, 117–208, and 217–306; these read VKFL…LFER, PGFL…SKQF, and DNIL…MNKA. Residues 24-42 form a helical membrane-spanning segment; that stretch reads KFLFGGLAGMGATVFVQPL. K57 carries the N6-succinyllysine modification. K73 carries the N6-acetyllysine modification. A helical membrane pass occupies residues 83 to 101; sequence GLSAGLLRQATYTTTRLGI. Residue Y102 is modified to Phosphotyrosine. The next 3 helical transmembrane spans lie at 119–140, 183–202, and 222–240; these read FLLKALIGMTAGATGAFVGPPA, GCIPTMARAVVVNAAQLASY, and HFCAIMISGLVTTAASMPV. K256 is subject to N6-acetyllysine. A helical transmembrane segment spans residues 281 to 300; that stretch reads GFTPYYARLGPHTVLTFIFL.

This sequence belongs to the mitochondrial carrier (TC 2.A.29) family. Interacts with SMIM26. Expressed in liver, heart and brain.

It localises to the mitochondrion inner membrane. The catalysed reaction is (S)-malate(in) + 2-oxoglutarate(out) = (S)-malate(out) + 2-oxoglutarate(in). It catalyses the reaction malonate(in) + 2-oxoglutarate(out) = malonate(out) + 2-oxoglutarate(in). It carries out the reaction succinate(in) + 2-oxoglutarate(out) = succinate(out) + 2-oxoglutarate(in). The enzyme catalyses maleate(in) + 2-oxoglutarate(out) = maleate(out) + 2-oxoglutarate(in). The catalysed reaction is oxaloacetate(in) + 2-oxoglutarate(out) = oxaloacetate(out) + 2-oxoglutarate(in). In terms of biological role, catalyzes the transport of 2-oxoglutarate (alpha-oxoglutarate) across the inner mitochondrial membrane in an electroneutral exchange for malate. Can also exchange 2-oxoglutarate for other dicarboxylic acids such as malonate, succinate, maleate and oxaloacetate, although with lower affinity. Contributes to several metabolic processes, including the malate-aspartate shuttle, the oxoglutarate/isocitrate shuttle, in gluconeogenesis from lactate, and in nitrogen metabolism. Maintains mitochondrial fusion and fission events, and the organization and morphology of cristae. Involved in the regulation of apoptosis. Helps protect from cytotoxic-induced apoptosis by modulating glutathione levels in mitochondria. This is Mitochondrial 2-oxoglutarate/malate carrier protein (Slc25a11) from Rattus norvegicus (Rat).